The chain runs to 307 residues: tRNA pseudouridine synthase B (307 aa).

Asp-38 acts as the Nucleophile in catalysis.

It belongs to the pseudouridine synthase TruB family. Type 1 subfamily.

It carries out the reaction uridine(55) in tRNA = pseudouridine(55) in tRNA. Responsible for synthesis of pseudouridine from uracil-55 in the psi GC loop of transfer RNAs. In Bacillus cereus (strain ATCC 10987 / NRS 248), this protein is tRNA pseudouridine synthase B.